The sequence spans 505 residues: Lysine--tRNA ligase (505 aa).

Residues Glu-415 and Glu-422 each coordinate Mg(2+).

It belongs to the class-II aminoacyl-tRNA synthetase family. As to quaternary structure, homodimer. Mg(2+) serves as cofactor.

It is found in the cytoplasm. It carries out the reaction tRNA(Lys) + L-lysine + ATP = L-lysyl-tRNA(Lys) + AMP + diphosphate. This is Lysine--tRNA ligase from Escherichia coli O157:H7.